A 103-amino-acid chain; its full sequence is Large ribosomal subunit protein bL21 (103 aa).

Belongs to the bacterial ribosomal protein bL21 family. As to quaternary structure, part of the 50S ribosomal subunit. Contacts protein L20.

Functionally, this protein binds to 23S rRNA in the presence of protein L20. The sequence is that of Large ribosomal subunit protein bL21 from Alteromonas mediterranea (strain DSM 17117 / CIP 110805 / LMG 28347 / Deep ecotype).